The following is a 169-amino-acid chain: E1B protein, small T-antigen (169 aa).

A disordered region spans residues 147–169 (GSVVEEEQGEEHLARDSDDPFFD). Basic and acidic residues predominate over residues 156–169 (EEHLARDSDDPFFD).

It belongs to the adenoviridae E1B 19 kDa protein family.

This is E1B protein, small T-antigen from Canine adenovirus serotype 1 (strain Glaxo) (CAdV-1).